We begin with the raw amino-acid sequence, 309 residues long: Olfactory receptor 10J5 (309 aa).

Residues 1–25 are Extracellular-facing; that stretch reads MKRKNFTEVSEFIFLGFSSFGKHQI. N-linked (GlcNAc...) asparagine glycosylation occurs at Asn5. The helical transmembrane segment at 26 to 46 threads the bilayer; sequence TLFVVFLTVYILTLVANIIIV. Topologically, residues 47-54 are cytoplasmic; the sequence is TIICIDHH. Residues 55-75 traverse the membrane as a helical segment; the sequence is LHTPMYFFLSMLASSETVYTL. Over 76–99 the chain is Extracellular; it reads VIVPRMLLSLIFHNQPISLAGCAT. Cys97 and Cys188 are oxidised to a cystine. The chain crosses the membrane as a helical span at residues 100-120; sequence QMFFFVILATNNCFLLTAMGY. The Cytoplasmic portion of the chain corresponds to 121–139; the sequence is DRYVAICRPLRYTVIMSKG. The chain crosses the membrane as a helical span at residues 140–160; sequence LCAQLVCGSFGIGLTMAVLHV. Over 161–196 the chain is Extracellular; it reads TAMFNLPFCGTVVDHFFCDIYPVMKLSCIDTTINEI. Residues 197-216 form a helical membrane-spanning segment; it reads INYGVSSFVIFVPIGLIFIS. At 217 to 236 the chain is on the cytoplasmic side; sequence YVLVISSILQIASAEGRKKT. Residues 237–257 form a helical membrane-spanning segment; it reads FATCVSHLTVVIVHCGCASIA. Topologically, residues 258-270 are extracellular; sequence YLKPKSESSIEKD. A helical membrane pass occupies residues 271–291; the sequence is LVLSVTYTIITPLLNPVVYSL. Residues 292 to 309 are Cytoplasmic-facing; it reads RNKEVKDALCRVVGRNIS.

Belongs to the G-protein coupled receptor 1 family. As to expression, expressed in both the aorta, the coronary artery and umbilical vein endothelial cells (HUVECs) (at protein level).

The protein localises to the cell membrane. Olfactory receptor. Activated by the synthetic floral odorant, lyral, and by alpha-cedrene, a sesquiterpene constituent of cedarwood oil. Its activation increases intracellular Ca(2+). Acts as a key regulator of myogenesis through its actions on cell migration and adhesion by activating the Ca(2+)-dependent AKT signal transduction pathway. Also acts as a regulator of angiogenesis. Moreover, plays a role in the regulation of lipid accumulation in hepatocytes via the cAMP-PKA pathway. May be involved in sperm chemotaxis and motility. The sequence is that of Olfactory receptor 10J5 from Homo sapiens (Human).